Consider the following 257-residue polypeptide: Nopaline permease ATP-binding protein P (257 aa).

Residues 8-253 enclose the ABC transporter domain; sequence LVAEDVHKNF…PTSPRCRAFL (246 aa). 40 to 47 lines the ATP pocket; sequence GSSGSGKS.

It belongs to the ABC transporter superfamily.

The protein localises to the cell inner membrane. Component of the nopaline active transport system probably consisting of four subunits: Q, M, P and T. This system is also capable of transporting octopine provided that catabolic functions are induced with nopaline. This is Nopaline permease ATP-binding protein P (nocP) from Agrobacterium fabrum (strain C58 / ATCC 33970) (Agrobacterium tumefaciens (strain C58)).